The sequence spans 218 residues: Thiopurine S-methyltransferase (218 aa).

The S-adenosyl-L-methionine site is built by W10, L45, E66, and R123.

The protein belongs to the class I-like SAM-binding methyltransferase superfamily. TPMT family.

The protein localises to the cytoplasm. It catalyses the reaction S-adenosyl-L-methionine + a thiopurine = S-adenosyl-L-homocysteine + a thiopurine S-methylether.. The polypeptide is Thiopurine S-methyltransferase (Shewanella putrefaciens (strain CN-32 / ATCC BAA-453)).